The sequence spans 655 residues: MGIFSIANQHIRFAVKLACAIVLALFIGFHFQLETPRWAVLTAAIVAAGPAFAAGGEPYSGAIRYRGMLRIIGTFIGCIAALIIIISMIRAPLLMILVCCVWAGFCTWISSLVRIENSYAWGLSGYTALIIVITIQTEPLLTPQFALERCSEIVIGIGCAILADLLFSPRSIKQEVDRELDSLLVAQYQLMQLCIKHGDSEEVDNAWGDLVRRTAALEGMRSNLNMESSRWVRANRRLKALNTLSLTLITQSCETYLIQNTRPELITDTFRELFETPVETVQDVHRQLKRMRRVIVWTGERETPVTLYSWVGAATRYLLLKRGVISNTKISATEEEILQGEPVVKVESAERHHAMVNFWRTTLSCILGTLFWLWTGWTSGNGAMVMIAVVTSLAMRLPNPRMVCIDFIYGTLAALPLGLLYFLVIIPNTQQSMLLLCLSLAVLGFFIGIEVQKRRLGSMGALASTINIIVLDNPMTFHFSQFLDSALGQIVGCMLAFIVILLVRDKSKDRTGRVLLNQFVSAAVSAMTTNVVRRKENRLPALYQQLFLLMNKFPGDLPKFRLALTMIIAHQRLRDAPIPVNEDLSVFHRQLRRTADHVISAGSDDKRRRYFGQLLDELDIYQEKLRIWEAPPQVTEPVKRLTGMLHKYQNALTDS.

Transmembrane regions (helical) follow at residues 13 to 33 (FAVK…HFQL), 38 to 58 (WAVL…GGEP), 69 to 89 (LRII…ISMI), 93 to 113 (LLMI…SSLV), 121 to 141 (WGLS…EPLL), 152 to 172 (EIVI…PRSI), 370 to 390 (LFWL…IAVV), 407 to 427 (FIYG…VIIP), 431 to 451 (QSML…GIEV), 459 to 479 (MGAL…TFHF), and 482 to 502 (FLDS…VILL).

It belongs to the aromatic acid exporter ArAE (TC 2.A.85) family.

It localises to the cell inner membrane. Its function is as follows. Forms an efflux pump with AaeA. Could function as a metabolic relief valve, allowing to eliminate certain compounds when they accumulate to high levels in the cell. In Salmonella dublin (strain CT_02021853), this protein is p-hydroxybenzoic acid efflux pump subunit AaeB.